The sequence spans 776 residues: Venom dipeptidyl peptidase 4 (776 aa).

The first 19 residues, 1–19, serve as a signal peptide directing secretion; that stretch reads MVPLRSFVLLNGLFFVLLA. 3 N-linked (GlcNAc...) asparagine glycosylation sites follow: N44, N66, and N329. Cystine bridges form between C449–C452 and C462–C480. N-linked (GlcNAc...) asparagine glycosylation is found at N504 and N577. The Charge relay system role is filled by S638. A disulfide bond links C658 and C769. N693 is a glycosylation site (N-linked (GlcNAc...) asparagine). Active-site charge relay system residues include D717 and H749.

The protein belongs to the peptidase S9B family. DPPIV subfamily. Expressed by the venom gland.

The protein resides in the secreted. It carries out the reaction Release of an N-terminal dipeptide, Xaa-Yaa-|-Zaa-, from a polypeptide, preferentially when Yaa is Pro, provided Zaa is neither Pro nor hydroxyproline.. Its function is as follows. Venom dipeptidyl-peptidase which removes N-terminal dipeptides sequentially from polypeptides having unsubstituted N-termini provided that the penultimate residue is proline. May process venom proteins into their active forms and/or modulate the chemotactic activity of immune cells after the insect sting. The sequence is that of Venom dipeptidyl peptidase 4 from Vespa velutina (Asian yellow-legged hornet).